Reading from the N-terminus, the 387-residue chain is 4-hydroxy-3-methylbut-2-en-1-yl diphosphate synthase (flavodoxin) (387 aa).

4 residues coordinate [4Fe-4S] cluster: C280, C283, C315, and E322.

This sequence belongs to the IspG family. [4Fe-4S] cluster is required as a cofactor.

It carries out the reaction (2E)-4-hydroxy-3-methylbut-2-enyl diphosphate + oxidized [flavodoxin] + H2O + 2 H(+) = 2-C-methyl-D-erythritol 2,4-cyclic diphosphate + reduced [flavodoxin]. It participates in isoprenoid biosynthesis; isopentenyl diphosphate biosynthesis via DXP pathway; isopentenyl diphosphate from 1-deoxy-D-xylulose 5-phosphate: step 5/6. Converts 2C-methyl-D-erythritol 2,4-cyclodiphosphate (ME-2,4cPP) into 1-hydroxy-2-methyl-2-(E)-butenyl 4-diphosphate. This chain is 4-hydroxy-3-methylbut-2-en-1-yl diphosphate synthase (flavodoxin), found in Mycobacterium bovis (strain BCG / Pasteur 1173P2).